The primary structure comprises 543 residues: Tyrosine-protein kinase Yes (543 aa).

The span at 1-20 shows a compositional bias: basic and acidic residues; the sequence is MGCIKSKENKSPAIKYRPEN. A disordered region spans residues 1–45; that stretch reads MGCIKSKENKSPAIKYRPENTPEPVSTSVSHYGAEPTTVSPCPSS. The N-myristoyl glycine moiety is linked to residue Gly2. Cys3 carries S-palmitoyl cysteine; in membrane form lipidation. The residue at position 21 (Thr21) is a Phosphothreonine. Tyr32 carries the phosphotyrosine modification. Ser40 is subject to Phosphoserine. The region spanning 91-152 is the SH3 domain; that stretch reads GGVTIFVALY…PSNYVAPADS (62 aa). An SH2 domain is found at 158–255; the sequence is WYFGKMGRKD…GLCHKLTTVC (98 aa). The Protein kinase domain maps to 277 to 530; sequence LRLEVKLGQG…YIQSFLEDYF (254 aa). ATP contacts are provided by residues 283–291 and Lys305; that span reads LGQGCFGEV. Phosphotyrosine is present on residues Tyr336 and Tyr345. Asp396 serves as the catalytic Proton acceptor. The residue at position 426 (Tyr426) is a Phosphotyrosine; by autocatalysis. Position 446 is a phosphotyrosine (Tyr446). Phosphotyrosine; by CSK is present on Tyr537.

This sequence belongs to the protein kinase superfamily. Tyr protein kinase family. SRC subfamily. In terms of assembly, interacts with YAP1 and CSF1R. Interacts with CTNND1; this interaction allows YES1-mediated activation of FYN and FER and subsequent phosphorylation of CTNND1. Interacts with FASLG. Interacts with IL6ST/gp130. Interacts with SCRIB, when YES1 is in a closed conformation; the interaction facilitates YES1 autophosphorylation. Post-translationally, phosphorylated. Phosphorylation by CSK on the C-terminal tail maintains the enzyme in an inactive state. Autophosphorylation at Tyr-426 maintains enzyme activity by blocking CSK-mediated inhibition. Palmitoylation at Cys-3 promotes membrane localization. In terms of tissue distribution, expressed in the epithelial cells of renal proximal tubules and stomach as well as hematopoietic cells in the bone marrow and spleen in the fetal tissues. In adult, expressed in epithelial cells of the renal proximal tubules and present in keratinocytes in the basal epidermal layer of epidermis.

It localises to the cell membrane. The protein resides in the cytoplasm. The protein localises to the cytoskeleton. It is found in the microtubule organizing center. Its subcellular location is the centrosome. It localises to the cytosol. The protein resides in the cell junction. The catalysed reaction is L-tyrosyl-[protein] + ATP = O-phospho-L-tyrosyl-[protein] + ADP + H(+). Functionally, non-receptor protein tyrosine kinase that is involved in the regulation of cell growth and survival, apoptosis, cell-cell adhesion, cytoskeleton remodeling, and differentiation. Stimulation by receptor tyrosine kinases (RTKs) including EGFR, PDGFR, CSF1R and FGFR leads to recruitment of YES1 to the phosphorylated receptor, and activation and phosphorylation of downstream substrates. Upon EGFR activation, promotes the phosphorylation of PARD3 to favor epithelial tight junction assembly. Participates in the phosphorylation of specific junctional components such as CTNND1 by stimulating the FYN and FER tyrosine kinases at cell-cell contacts. Upon T-cell stimulation by CXCL12, phosphorylates collapsin response mediator protein 2/DPYSL2 and induces T-cell migration. Participates in CD95L/FASLG signaling pathway and mediates AKT-mediated cell migration. Plays a role in cell cycle progression by phosphorylating the cyclin-dependent kinase 4/CDK4 thus regulating the G1 phase. Also involved in G2/M progression and cytokinesis. Catalyzes phosphorylation of organic cation transporter OCT2 which induces its transport activity. The protein is Tyrosine-protein kinase Yes (YES1) of Homo sapiens (Human).